A 422-amino-acid polypeptide reads, in one-letter code: Enolase (422 aa).

(2R)-2-phosphoglycerate is bound at residue Gln-161. The Proton donor role is filled by Glu-203. Asp-240, Glu-283, and Asp-310 together coordinate Mg(2+). Positions 335, 364, 365, and 386 each coordinate (2R)-2-phosphoglycerate. Catalysis depends on Lys-335, which acts as the Proton acceptor.

The protein belongs to the enolase family. It depends on Mg(2+) as a cofactor.

The protein localises to the cytoplasm. It is found in the secreted. It localises to the cell surface. The enzyme catalyses (2R)-2-phosphoglycerate = phosphoenolpyruvate + H2O. It functions in the pathway carbohydrate degradation; glycolysis; pyruvate from D-glyceraldehyde 3-phosphate: step 4/5. Functionally, catalyzes the reversible conversion of 2-phosphoglycerate (2-PG) into phosphoenolpyruvate (PEP). It is essential for the degradation of carbohydrates via glycolysis. This is Enolase from Deinococcus radiodurans (strain ATCC 13939 / DSM 20539 / JCM 16871 / CCUG 27074 / LMG 4051 / NBRC 15346 / NCIMB 9279 / VKM B-1422 / R1).